Here is a 76-residue protein sequence, read N- to C-terminus: U1-cyrtautoxin-As1b (76 aa).

Disulfide bonds link Cys23/Cys37, Cys30/Cys51, Cys36/Cys66, and Cys69/Cys76.

This sequence belongs to the neurotoxin 21 family. In terms of tissue distribution, expressed by the venom gland.

The protein localises to the secreted. Functionally, neurotoxin with probable ion channel impairing activity. Is both paralytic and lethal, when injected into lepidopteran larvae. The sequence is that of U1-cyrtautoxin-As1b from Apomastus schlingeri (Trap-door spider).